We begin with the raw amino-acid sequence, 744 residues long: NAD(P)H-quinone oxidoreductase subunit 5, chloroplastic (744 aa).

The next 16 membrane-spanning stretches (helical) occupy residues 9 to 29, 40 to 60, 89 to 109, 125 to 145, 147 to 167, 185 to 205, 219 to 239, 258 to 278, 290 to 312, 327 to 347, 354 to 374, 396 to 416, 425 to 445, 549 to 569, 608 to 628, and 724 to 744; these read WIIP…LFLF, WAFQ…NLSI, IDPL…LVLI, FVYM…SNLI, IYIF…FWFT, GDFG…SFEF, NEVN…GAIA, TPIS…FLVA, IMNF…ALAQ, LGYM…FHLI, ALLF…VGYC, TSFL…CFWS, WLYS…TAFY, LFPI…GIPF, VFSV…YKPV, and YLFF…FLNF.

It belongs to the complex I subunit 5 family. In terms of assembly, NDH is composed of at least 16 different subunits, 5 of which are encoded in the nucleus.

It is found in the plastid. The protein resides in the chloroplast thylakoid membrane. It catalyses the reaction a plastoquinone + NADH + (n+1) H(+)(in) = a plastoquinol + NAD(+) + n H(+)(out). It carries out the reaction a plastoquinone + NADPH + (n+1) H(+)(in) = a plastoquinol + NADP(+) + n H(+)(out). In terms of biological role, NDH shuttles electrons from NAD(P)H:plastoquinone, via FMN and iron-sulfur (Fe-S) centers, to quinones in the photosynthetic chain and possibly in a chloroplast respiratory chain. The immediate electron acceptor for the enzyme in this species is believed to be plastoquinone. Couples the redox reaction to proton translocation, and thus conserves the redox energy in a proton gradient. The polypeptide is NAD(P)H-quinone oxidoreductase subunit 5, chloroplastic (ndhF) (Mutisia acuminata).